Here is a 609-residue protein sequence, read N- to C-terminus: Sulfite reductase [NADPH] flavoprotein alpha-component (609 aa).

The region spanning isoleucine 72–valine 210 is the Flavodoxin-like domain. FMN-binding positions include serine 78–alanine 83 and serine 125–glycine 128. One can recognise an FAD-binding FR-type domain in the interval serine 244–proline 458. FAD is bound by residues threonine 332, glutamine 366, arginine 396–serine 399, threonine 414–glycine 416, tyrosine 420, and glycine 429–serine 432. NADP(+)-binding positions include serine 529–arginine 530, lysine 535–glutamine 539, and aspartate 571. Position 609 (tyrosine 609) interacts with FAD.

Belongs to the NADPH-dependent sulphite reductase flavoprotein subunit CysJ family. It in the N-terminal section; belongs to the flavodoxin family. This sequence in the C-terminal section; belongs to the flavoprotein pyridine nucleotide cytochrome reductase family. Alpha(8)-beta(8). The alpha component is a flavoprotein, the beta component is a hemoprotein. The cofactor is FAD. FMN is required as a cofactor.

The enzyme catalyses hydrogen sulfide + 3 NADP(+) + 3 H2O = sulfite + 3 NADPH + 4 H(+). It participates in sulfur metabolism; hydrogen sulfide biosynthesis; hydrogen sulfide from sulfite (NADPH route): step 1/1. Component of the sulfite reductase complex that catalyzes the 6-electron reduction of sulfite to sulfide. This is one of several activities required for the biosynthesis of L-cysteine from sulfate. The flavoprotein component catalyzes the electron flow from NADPH -&gt; FAD -&gt; FMN to the hemoprotein component. The protein is Sulfite reductase [NADPH] flavoprotein alpha-component of Pectobacterium atrosepticum (strain SCRI 1043 / ATCC BAA-672) (Erwinia carotovora subsp. atroseptica).